The primary structure comprises 401 residues: Probable inactive purple acid phosphatase 14 (401 aa).

An N-terminal signal peptide occupies residues 1 to 30 (MEETRRRFVISSVLSVSLIYLCLSTCHVSA). Residue Asn-79 is glycosylated (N-linked (GlcNAc...) asparagine). Asn-197 lines the substrate pocket. Asn-197 provides a ligand contact to Zn(2+). Asn-246 is a glycosylation site (N-linked (GlcNAc...) asparagine). His-256 is a Zn(2+) binding site. Asn-266 carries an N-linked (GlcNAc...) asparagine glycan. His-305 contacts Zn(2+). 305-307 (HDH) provides a ligand contact to substrate. His-307 contributes to the Fe cation binding site. 2 N-linked (GlcNAc...) asparagine glycosylation sites follow: Asn-371 and Asn-384.

Belongs to the metallophosphoesterase superfamily. Purple acid phosphatase family. In terms of assembly, homodimer. Fe cation serves as cofactor. Requires Zn(2+) as cofactor. Specifically expressed in flowers.

The protein localises to the secreted. The protein is Probable inactive purple acid phosphatase 14 (PAP14) of Arabidopsis thaliana (Mouse-ear cress).